The primary structure comprises 401 residues: MTLHTSPILHSLLDTDAYKLHMQQAVYHHYYDVDVAAEFRCRGDELLGVYADEIAHQVDLMRFLSLSDDEFTYLSSLPFFQQDYLNWLRNFRFNPQQVSIKNNAGKLDIRITGPWREVILWEVPLLAVISEVVHRHRSPNVTTEQAVAQLSTSLESFRQNSMNVDLSQFKLMDFGTRRRFSGDIQQTIVTALQADFPYLIGTSNYDLARRLGITPVGTQAHEWFQAHQQISPTLANSQRAALQMWLREYPTHLGIALTDCITMDAFLRDFDLPFAEAYQGLRHDSGDPVDWGEKAIAHYQRLNIDPMSKTLVFSDNLNLDKALVLYRHFCQRVNLVFGMGTRLTCDIPGVKPLNIVIKLVECNGKPVAKLSDSPGKTICQDQNFVCELRKAFDLPRVKKAS.

Histidine 221 bears the Phosphohistidine; by autocatalysis mark.

This sequence belongs to the NAPRTase family. Transiently phosphorylated on a His residue during the reaction cycle. Phosphorylation strongly increases the affinity for substrates and increases the rate of nicotinate D-ribonucleotide production. Dephosphorylation regenerates the low-affinity form of the enzyme, leading to product release.

It catalyses the reaction nicotinate + 5-phospho-alpha-D-ribose 1-diphosphate + ATP + H2O = nicotinate beta-D-ribonucleotide + ADP + phosphate + diphosphate. The protein operates within cofactor biosynthesis; NAD(+) biosynthesis; nicotinate D-ribonucleotide from nicotinate: step 1/1. Catalyzes the synthesis of beta-nicotinate D-ribonucleotide from nicotinate and 5-phospho-D-ribose 1-phosphate at the expense of ATP. In Pectobacterium atrosepticum (strain SCRI 1043 / ATCC BAA-672) (Erwinia carotovora subsp. atroseptica), this protein is Nicotinate phosphoribosyltransferase.